Consider the following 462-residue polypeptide: Microspherule protein 1 (462 aa).

At M1 the chain carries N-acetylmethionine. The disordered stretch occupies residues 1–130 (MDKDSQGLLD…KSKQPLQVTK (130 aa)). At S22 the chain carries Phosphoserine. Residues 43–55 (PKRRSSSRFIKRK) show a composition bias toward basic residues. The residue at position 102 (S102) is a Phosphoserine. The residue at position 103 (T103) is a Phosphothreonine. Over residues 103–112 (TPVPPSPAPA) the composition is skewed to pro residues. A Phosphoserine modification is found at S108. The Nuclear localization signal signature appears at 113–123 (PGLTKRVKKSK). N6-acetyllysine occurs at positions 123 and 130. S282 bears the Phosphoserine mark. Positions 301–335 (LEHELMVADRRQKREIRQLEQELHKWQVLVDSITG) form a coiled coil. The 57-residue stretch at 363–419 (ITLGRATKDNQIDVDLSLEGPAWKISRKQGVIKLKNNGDFFIANEGRRPIYIDGRPV) folds into the FHA domain. The UBR5-degron motif lies at 389–396 (RKQGVIKL).

As to quaternary structure, component of the chromatin remodeling INO80 complex; specifically part of a complex module associated with the N-terminus of INO80. Component of some MLL1/MLL complex, at least composed of the core components KMT2A/MLL1, ASH2L, HCFC1, WDR5 and RBBP5, as well as the facultative components BACC1, CHD8, E2F6, HSP70, INO80C, KANSL1, LAS1L, MAX, MCRS1, MGA, KAT8/MOF, PELP1, PHF20, PRP31, RING2, RUVB1/TIP49A, RUVB2/TIP49B, SENP3, TAF1, TAF4, TAF6, TAF7, TAF9 and TEX10. Component of the NSL complex at least composed of MOF/KAT8, KANSL1, KANSL2, KANSL3, MCRS1, PHF20, OGT1/OGT, WDR5 and HCFC1. Interacts with NOP2. Interacts with PINX1. Interacts with TERT. Interacts with CCDC85B. Interacts with DAXX. Interacts (via N-terminus) with FMR1 (via phosphorylated form). Interacts with FXR1 and FXR2. Interacts (via C-terminus) with NDE1 (via C-terminus); phosphorylation of NDE1 inhibits the interaction. Interacts (via C-terminus) with ZNF375. Interacts (via C-terminus) with active GTP-bound RHEB (via N-terminus) under conditions of high amino acid concentration; the interaction promotes mTORC1 complex activation by RHEB. Interacts (via N-terminus) with the mTORC1 complex; the interaction ensures mTORC1 activation by RHEB. Interacts with DYNC1I1; the interaction is required for the proper distribution of centriolar satellites. Interacts with TTBK2; the interaction is required for recruitment of TTBK2 to the mother centriole. Interacts with KIF2A; the interaction occurs during mitosis and facilitates chromosome alignment. In terms of assembly, (Microbial infection) Interacts with Herpes simplex virus ICP22. Ubiquitinated by UBR5 when not assembled in the INO80 complex, leading to its degradation: UBR5 recognizes and binds a degron that is not accessible when MCRS1 is part of the INO80 complex. Post-translationally, phosphorylated by AURKA on Ser-35 and/or Ser-36 during mitosis which is required for kinetochore fiber assembly and mitotic progression but not for spindle localization or for chromosome-induced microtuble aster formation. Also phosphorylated by AURKA on Ser-85 and/or Ser-87. Phosphorylated by TTK/MPS1 which enhances recruitment of KIF2A to the minus end of spindle microtubules and facilitates precise chromosome segregation. As to expression, detected in testis, and at lower levels in spleen, thymus, prostate, uterus, small intestine, colon and leukocytes.

It localises to the nucleus. The protein localises to the nucleolus. The protein resides in the cytoplasm. It is found in the cytoskeleton. Its subcellular location is the microtubule organizing center. It localises to the centrosome. The protein localises to the spindle pole. The protein resides in the chromosome. It is found in the centromere. Its subcellular location is the kinetochore. It localises to the lysosome. The protein localises to the centriolar satellite. Functionally, modulates the transcription repressor activity of DAXX by recruiting it to the nucleolus. As part of the NSL complex, may be involved in acetylation of nucleosomal histone H4 on several lysine residues. Putative regulatory component of the chromatin remodeling INO80 complex which is involved in transcriptional regulation, DNA replication and probably DNA repair. May also be an inhibitor of TERT telomerase activity. Binds to G-quadruplex structures in mRNA. Binds to RNA homomer poly(G) and poly(U). Maintains RHEB at the lysosome in its active GTP-bound form and prevents its interaction with the mTORC1 complex inhibitor TSC2, ensuring activation of the mTORC1 complex by RHEB. Stabilizes the minus ends of kinetochore fibers by protecting them from depolymerization, ensuring functional spindle assembly during mitosis. Following phosphorylation by TTK/MPS1, enhances recruitment of KIF2A to the minus ends of mitotic spindle microtubules which promotes chromosome alignment. Regulates the morphology of microtubule minus ends in mitotic spindle by maintaining them in a closed conformation characterized by the presence of an electron-dense cap. Regulates G2/M transition and spindle assembly during oocyte meiosis. Mediates histone modifications and transcriptional regulation in germinal vesicle oocytes which are required for meiotic progression. Also regulates microtubule nucleation and spindle assembly by activating aurora kinases during oocyte meiosis. Contributes to the establishment of centriolar satellites and also plays a role in primary cilium formation by recruiting TTBK2 to the mother centriole which is necessary for removal of the CP110 cap from the mother centriole, an early step in ciliogenesis. Required for epiblast development during early embryogenesis. Essential for cell viability. The sequence is that of Microspherule protein 1 (MCRS1) from Homo sapiens (Human).